Consider the following 328-residue polypeptide: Reticulocalbin-3 (328 aa).

Residues 1 to 20 (MMWRWSFLLLLLLLRHWALG) form the signal peptide. A disordered region spans residues 24–48 (PDAGPHGQDRVHHGTPLSEAPHDDA). EF-hand domains follow at residues 77–112 (QARLGRIVDRMDLAGDSDGWVSLAELRAWIAHTQQR), 113–148 (HIRDSVSAAWHTYDTDRDGRVGWEELRNATYGHYEP), 163–198 (KMLARDERRFRVADQDGDSMATREELTAFLHPEEFP), 200–235 (MRDIVVAETLEDLDKNKDGYVQVEEYIADLYSEEPG), 241–276 (WVQTERQQFREFRDLNKDGRLDGSEVGYWVLPPSQD), and 277–312 (QPLVEANHLLHESDTDKDGRLSKAEILSNWNMFVGS). Residues D92, D94, W96, E101, D126, D128, D130, R132, and E137 each contribute to the Ca(2+) site. N140 is a glycosylation site (N-linked (GlcNAc...) asparagine). Positions 176, 178, 180, 182, 187, 213, 215, 217, 219, 224, 254, 256, 258, 260, 265, 290, 292, 294, 296, and 301 each coordinate Ca(2+). A Prevents secretion from ER motif is present at residues 325 to 328 (HDEL).

The protein belongs to the CREC family. Interacts with PCSK6 (immature form including the propeptide); probably involved in the maturation and the secretion of PCSK6. In terms of processing, degraded by PCSK6 and other endoproteases including FURIN and PCSK5. N-glycosylated. Highly expressed in lung and heart. Also detected in liver, spleen, kidney, skeletal muscle, intestine, stomach, and brain.

The protein localises to the endoplasmic reticulum lumen. Functionally, probable molecular chaperone assisting protein biosynthesis and transport in the endoplasmic reticulum. Required for the proper biosynthesis and transport of pulmonary surfactant-associated protein A/SP-A, pulmonary surfactant-associated protein D/SP-D and the lipid transporter ABCA3. By regulating both the proper expression and the degradation through the endoplasmic reticulum-associated protein degradation pathway of these proteins plays a crucial role in pulmonary surfactant homeostasis. Has an anti-fibrotic activity by negatively regulating the secretion of type I and type III collagens. This calcium-binding protein also transiently associates with immature PCSK6 and regulates its secretion. The chain is Reticulocalbin-3 from Mus musculus (Mouse).